We begin with the raw amino-acid sequence, 555 residues long: CTP synthase (555 aa).

Residues Met1–Ile271 are amidoligase domain. A CTP-binding site is contributed by Ser19. Position 19 (Ser19) interacts with UTP. Residues Ser20–Leu25 and Asp77 contribute to the ATP site. Positions 77 and 145 each coordinate Mg(2+). CTP contacts are provided by residues Asp152 to Glu154, Lys192 to Gln197, and Lys228. Residues Lys192–Gln197 and Lys228 contribute to the UTP site. Positions Arg297 to Gln538 constitute a Glutamine amidotransferase type-1 domain. An L-glutamine-binding site is contributed by Gly358. The active-site Nucleophile; for glutamine hydrolysis is Cys385. L-glutamine contacts are provided by residues Leu386–Gln389, Glu409, and Arg466. Catalysis depends on residues His511 and Glu513.

Belongs to the CTP synthase family. As to quaternary structure, homotetramer.

The enzyme catalyses UTP + L-glutamine + ATP + H2O = CTP + L-glutamate + ADP + phosphate + 2 H(+). It catalyses the reaction L-glutamine + H2O = L-glutamate + NH4(+). It carries out the reaction UTP + NH4(+) + ATP = CTP + ADP + phosphate + 2 H(+). It functions in the pathway pyrimidine metabolism; CTP biosynthesis via de novo pathway; CTP from UDP: step 2/2. Its activity is regulated as follows. Allosterically activated by GTP, when glutamine is the substrate; GTP has no effect on the reaction when ammonia is the substrate. The allosteric effector GTP functions by stabilizing the protein conformation that binds the tetrahedral intermediate(s) formed during glutamine hydrolysis. Inhibited by the product CTP, via allosteric rather than competitive inhibition. Functionally, catalyzes the ATP-dependent amination of UTP to CTP with either L-glutamine or ammonia as the source of nitrogen. Regulates intracellular CTP levels through interactions with the four ribonucleotide triphosphates. This chain is CTP synthase, found in Anaeromyxobacter sp. (strain Fw109-5).